Consider the following 393-residue polypeptide: Sedoheptulose-1,7-bisphosphatase, chloroplastic (393 aa).

A disulfide bond links C115 and C120. Positions 126, 155, 176, 178, and 179 each coordinate Mg(2+). Substrate is bound by residues 179 to 182, Y290, and K320; that span reads DGSS. E326 lines the Mg(2+) pocket.

It belongs to the FBPase class 1 family. As to quaternary structure, homodimer. Requires Mg(2+) as cofactor.

The protein resides in the plastid. It is found in the chloroplast. It carries out the reaction D-sedoheptulose 1,7-bisphosphate + H2O = D-sedoheptulose 7-phosphate + phosphate. Its pathway is carbohydrate biosynthesis; Calvin cycle. The protein is Sedoheptulose-1,7-bisphosphatase, chloroplastic of Triticum aestivum (Wheat).